We begin with the raw amino-acid sequence, 350 residues long: ADP-ribose pyrophosphatase, mitochondrial (350 aa).

The transit peptide at 1–46 directs the protein to the mitochondrion; that stretch reads MAGRSLGKAVATVSLSVALASVTVRSSGCRAIPAPRNPFPSCGFHL. 2 disordered regions span residues 53–77 and 116–153; these read GSNG…KVER and SESS…PAGR. Position 121 is a phosphoserine (Ser-121). A compositionally biased stretch (basic and acidic residues) spans 124 to 135; sequence FNEKDGHVERKS. In terms of domain architecture, Nudix hydrolase spans 178–334; it reads WKRDESGNKI…SQFIKLVAEK (157 aa). A Nudix box motif is present at residues 215–237; it reads GMVDPGEKISATLKREFGEEALN.

Belongs to the Nudix hydrolase family. NudF subfamily. Monomer. Interacts with GLOD4. Requires Mg(2+) as cofactor. Mn(2+) serves as cofactor.

Its subcellular location is the mitochondrion. The catalysed reaction is ADP-D-ribose + H2O = D-ribose 5-phosphate + AMP + 2 H(+). In terms of biological role, hydrolyzes ADP-ribose (ADPR) to AMP and ribose 5'-phosphate. This Rattus norvegicus (Rat) protein is ADP-ribose pyrophosphatase, mitochondrial (Nudt9).